Consider the following 303-residue polypeptide: Lipoyl synthase (303 aa).

The [4Fe-4S] cluster site is built by Cys40, Cys45, Cys51, Cys67, Cys71, Cys74, and Ser280. The Radical SAM core domain occupies 53–269; that stretch reads AVRKTATFMI…KEIALSKGFS (217 aa).

The protein belongs to the radical SAM superfamily. Lipoyl synthase family. [4Fe-4S] cluster is required as a cofactor.

Its subcellular location is the cytoplasm. It catalyses the reaction [[Fe-S] cluster scaffold protein carrying a second [4Fe-4S](2+) cluster] + N(6)-octanoyl-L-lysyl-[protein] + 2 oxidized [2Fe-2S]-[ferredoxin] + 2 S-adenosyl-L-methionine + 4 H(+) = [[Fe-S] cluster scaffold protein] + N(6)-[(R)-dihydrolipoyl]-L-lysyl-[protein] + 4 Fe(3+) + 2 hydrogen sulfide + 2 5'-deoxyadenosine + 2 L-methionine + 2 reduced [2Fe-2S]-[ferredoxin]. It participates in protein modification; protein lipoylation via endogenous pathway; protein N(6)-(lipoyl)lysine from octanoyl-[acyl-carrier-protein]. Its function is as follows. Catalyzes the radical-mediated insertion of two sulfur atoms into the C-6 and C-8 positions of the octanoyl moiety bound to the lipoyl domains of lipoate-dependent enzymes, thereby converting the octanoylated domains into lipoylated derivatives. This chain is Lipoyl synthase, found in Halalkalibacterium halodurans (strain ATCC BAA-125 / DSM 18197 / FERM 7344 / JCM 9153 / C-125) (Bacillus halodurans).